Reading from the N-terminus, the 115-residue chain is Large ribosomal subunit protein bL20 (115 aa).

It belongs to the bacterial ribosomal protein bL20 family.

Functionally, binds directly to 23S ribosomal RNA and is necessary for the in vitro assembly process of the 50S ribosomal subunit. It is not involved in the protein synthesizing functions of that subunit. This is Large ribosomal subunit protein bL20 from Prochlorococcus marinus (strain MIT 9301).